The chain runs to 205 residues: Orotate phosphoribosyltransferase (205 aa).

116-124 provides a ligand contact to 5-phospho-alpha-D-ribose 1-diphosphate; that stretch reads EDIITTGGS. Orotate-binding residues include T120 and R148.

The protein belongs to the purine/pyrimidine phosphoribosyltransferase family. PyrE subfamily. As to quaternary structure, homodimer. Requires Mg(2+) as cofactor.

The catalysed reaction is orotidine 5'-phosphate + diphosphate = orotate + 5-phospho-alpha-D-ribose 1-diphosphate. It functions in the pathway pyrimidine metabolism; UMP biosynthesis via de novo pathway; UMP from orotate: step 1/2. Functionally, catalyzes the transfer of a ribosyl phosphate group from 5-phosphoribose 1-diphosphate to orotate, leading to the formation of orotidine monophosphate (OMP). This is Orotate phosphoribosyltransferase from Wolinella succinogenes (strain ATCC 29543 / DSM 1740 / CCUG 13145 / JCM 31913 / LMG 7466 / NCTC 11488 / FDC 602W) (Vibrio succinogenes).